Reading from the N-terminus, the 117-residue chain is Immunoglobulin heavy variable 1-24 (117 aa).

The N-terminal stretch at 1–19 (MDCTWRILFLVAAATGTHA) is a signal peptide. Residues 20-44 (QVQLVQSGAEVKKPGASVKVSCKVS) are framework-1. The region spanning 20 to 117 (QVQLVQSGAE…EDTAVYYCAT (98 aa)) is the Ig-like domain. A disulfide bridge links Cys41 with Cys115. Positions 45–52 (GYTLTELS) are complementarity-determining-1. The segment at 53–69 (MHWVRQAPGKGLEWMGG) is framework-2. The interval 70 to 77 (FDPEDGET) is complementarity-determining-2. The tract at residues 78–115 (IYAQKFQGRVTMTEDTSTDTAYMELSSLRSEDTAVYYC) is framework-3. The complementarity-determining-3 stretch occupies residues 116-117 (AT).

As to quaternary structure, immunoglobulins are composed of two identical heavy chains and two identical light chains; disulfide-linked.

Its subcellular location is the secreted. The protein resides in the cell membrane. Its function is as follows. V region of the variable domain of immunoglobulin heavy chains that participates in the antigen recognition. Immunoglobulins, also known as antibodies, are membrane-bound or secreted glycoproteins produced by B lymphocytes. In the recognition phase of humoral immunity, the membrane-bound immunoglobulins serve as receptors which, upon binding of a specific antigen, trigger the clonal expansion and differentiation of B lymphocytes into immunoglobulins-secreting plasma cells. Secreted immunoglobulins mediate the effector phase of humoral immunity, which results in the elimination of bound antigens. The antigen binding site is formed by the variable domain of one heavy chain, together with that of its associated light chain. Thus, each immunoglobulin has two antigen binding sites with remarkable affinity for a particular antigen. The variable domains are assembled by a process called V-(D)-J rearrangement and can then be subjected to somatic hypermutations which, after exposure to antigen and selection, allow affinity maturation for a particular antigen. This is Immunoglobulin heavy variable 1-24 from Homo sapiens (Human).